The primary structure comprises 333 residues: Glyceraldehyde-3-phosphate dehydrogenase (333 aa).

Residues 12-13 (RI), Asp-36, Arg-80, and Ser-120 each bind NAD(+). D-glyceraldehyde 3-phosphate-binding positions include 150 to 152 (SCT), Thr-181, Arg-196, 209 to 210 (TG), and Arg-232. Cys-151 functions as the Nucleophile in the catalytic mechanism. Residue Asn-314 participates in NAD(+) binding.

This sequence belongs to the glyceraldehyde-3-phosphate dehydrogenase family. As to quaternary structure, homotetramer.

It localises to the cytoplasm. It carries out the reaction D-glyceraldehyde 3-phosphate + phosphate + NAD(+) = (2R)-3-phospho-glyceroyl phosphate + NADH + H(+). Its pathway is carbohydrate degradation; glycolysis; pyruvate from D-glyceraldehyde 3-phosphate: step 1/5. In terms of biological role, catalyzes the oxidative phosphorylation of glyceraldehyde 3-phosphate (G3P) to 1,3-bisphosphoglycerate (BPG) using the cofactor NAD. The first reaction step involves the formation of a hemiacetal intermediate between G3P and a cysteine residue, and this hemiacetal intermediate is then oxidized to a thioester, with concomitant reduction of NAD to NADH. The reduced NADH is then exchanged with the second NAD, and the thioester is attacked by a nucleophilic inorganic phosphate to produce BPG. This Cereibacter sphaeroides (Rhodobacter sphaeroides) protein is Glyceraldehyde-3-phosphate dehydrogenase (gapB).